The chain runs to 201 residues: Peptide deformylase (201 aa).

Positions 1–17 (MANNFSQLARKSKTNSP) are enriched in polar residues. The interval 1 to 24 (MANNFSQLARKSKTNSPIEKVSKE) is disordered. Positions 121 and 163 each coordinate Fe cation. Residue Glu-164 is part of the active site. His-167 is a Fe cation binding site.

This sequence belongs to the polypeptide deformylase family. The cofactor is Fe(2+).

The enzyme catalyses N-terminal N-formyl-L-methionyl-[peptide] + H2O = N-terminal L-methionyl-[peptide] + formate. In terms of biological role, removes the formyl group from the N-terminal Met of newly synthesized proteins. Requires at least a dipeptide for an efficient rate of reaction. N-terminal L-methionine is a prerequisite for activity but the enzyme has broad specificity at other positions. The sequence is that of Peptide deformylase from Prochlorococcus marinus subsp. pastoris (strain CCMP1986 / NIES-2087 / MED4).